The chain runs to 177 residues: RNA pyrophosphohydrolase (177 aa).

Residues 6–149 enclose the Nudix hydrolase domain; the sequence is GYRPNVGIVI…KRDVYRRVMK (144 aa). A Nudix box motif is present at residues 38-59; sequence GGINPGESAEQAMYRELFEEVG.

It belongs to the Nudix hydrolase family. RppH subfamily. A divalent metal cation is required as a cofactor.

Functionally, accelerates the degradation of transcripts by removing pyrophosphate from the 5'-end of triphosphorylated RNA, leading to a more labile monophosphorylated state that can stimulate subsequent ribonuclease cleavage. This Cronobacter sakazakii (strain ATCC BAA-894) (Enterobacter sakazakii) protein is RNA pyrophosphohydrolase.